Here is a 283-residue protein sequence, read N- to C-terminus: Non-selective voltage-gated ion channel VDAC1 (283 aa).

A2 bears the N-acetylalanine mark. Position 12 (K12) interacts with ATP. A Glycyl lysine isopeptide (Lys-Gly) (interchain with G-Cter in ubiquitin) cross-link involves residue K12. Phosphoserine is present on S13. The residue at position 19 (T19) is a Phosphothreonine. K20 is an ATP binding site. K20 carries the N6-acetyllysine; alternate modification. N6-succinyllysine; alternate is present on K20. K20 is covalently cross-linked (Glycyl lysine isopeptide (Lys-Gly) (interchain with G-Cter in ubiquitin); alternate). The next 2 beta stranded transmembrane spans lie at 26 to 35 (LIKLDLKTKS) and 39 to 47 (LEFTSSGSA). Residues K53 and K61 each participate in a glycyl lysine isopeptide (Lys-Gly) (interchain with G-Cter in ubiquitin) cross-link. A beta stranded membrane pass occupies residues 54 to 64 (VTGSLETKYRW). Residue Y67 is modified to Phosphotyrosine. 3 beta stranded membrane-spanning segments follow: residues 69–76 (LTFTEKWN), 80–89 (TLGTEITVED), and 95–104 (LKLTFDSSFS). T107 carries the phosphothreonine modification. K109 bears the N6-acetyllysine; alternate mark. Residue K109 forms a Glycyl lysine isopeptide (Lys-Gly) (interchain with G-Cter in ubiquitin); alternate linkage. A Glycyl lysine isopeptide (Lys-Gly) (interchain with G-Cter in ubiquitin) cross-link involves residue K110. 4 beta stranded membrane-spanning segments follow: residues 111–120 (NAKIKTGYKR), 123–130 (INLGCDVD), 137–145 (SIRGALVLG), and 150–158 (LAGYQMNFE). K161 is covalently cross-linked (Glycyl lysine isopeptide (Lys-Gly) (interchain with G-Cter in ubiquitin)). 6 consecutive transmembrane segments (beta stranded) span residues 163–175 (RVTQ…GYKT), 178–185 (FQLHTNVN), 189–198 (EFGGSIYQKV), 202–211 (LETAVNLAWT), 218–227 (RFGIAAKYQI), and 231–238 (ACFSAKVN). The residue at position 193 (S193) is a Phosphoserine; by NEK1. Position 240 is a phosphoserine (S240). 242 to 244 (LIG) is a binding site for NAD(+). A beta stranded membrane pass occupies residues 242-251 (LIGLGYTQTL). K252 carries the N6-acetyllysine modification. The beta stranded transmembrane segment at 254–263 (GIKLTLSALL) threads the bilayer. Residue 260–264 (SALLD) coordinates NAD(+). N6-acetyllysine; alternate is present on K266. Residue K266 forms a Glycyl lysine isopeptide (Lys-Gly) (interchain with G-Cter in ubiquitin); alternate linkage. The beta stranded transmembrane segment at 273–282 (HKLGLGLEFQ) threads the bilayer. K274 is covalently cross-linked (Glycyl lysine isopeptide (Lys-Gly) (interchain with G-Cter in ubiquitin)).

It belongs to the eukaryotic mitochondrial porin family. As to quaternary structure, homodimer and homotrimer; in response to cyclic AMP or calcium; oligomerization is required for scramblase activity. Component of the mitochondrial permeability transition pore complex (mPTPC), at least composed of SPG7, VDAC1 and PPIF. Interacts with SPG7, NIPSNAP2 and SLC25A30. Interacts with hexokinases including HK1. The HK1-VDAC1 complex interacts with ATF2. Interacts with BCL2L1. Interacts with BAK1. Interacts with RTL10/BOP (via BH3 domain). Interacts with amyloid-beta and APP; induces VDAC1 dephosphorylation. Interacts with TMEM41B. Interacts with BCAP31. Interacts with HSPA9; this interaction couples ITPR1 to VDAC1. Post-translationally, phosphorylation at Ser-193 by NEK1 promotes the closed conformational state preventing excessive mitochondrial membrane permeability and subsequent apoptotic cell death after injury. Phosphorylation by the AKT-GSK3B axis stabilizes the protein probably by preventing ubiquitin-mediated proteasomal degradation. In terms of processing, ubiquitinated. Undergoes monoubiquitination and polyubiquitination by PRKN; monoubiquitination at Lys-274 inhibits apoptosis, whereas polyubiquitination leads to its degradation and promotes mitophagy. Deubiquitinated by USP30. Predominantly in brain astrocytes.

It is found in the mitochondrion outer membrane. Its subcellular location is the cell membrane. The protein resides in the membrane raft. The catalysed reaction is chloride(in) = chloride(out). It carries out the reaction K(+)(in) = K(+)(out). It catalyses the reaction ATP(in) = ATP(out). The enzyme catalyses Ca(2+)(in) = Ca(2+)(out). The catalysed reaction is Na(+)(in) = Na(+)(out). It carries out the reaction Mg(2+)(in) = Mg(2+)(out). It catalyses the reaction L-glutamate(out) = L-glutamate(in). The enzyme catalyses dopamine(out) = dopamine(in). The catalysed reaction is acetylcholine(in) = acetylcholine(out). It carries out the reaction Fe(III)-[cytochrome c](out) = Fe(III)-[cytochrome c](in). It catalyses the reaction a 1,2-diacyl-sn-glycero-3-phosphocholine(in) = a 1,2-diacyl-sn-glycero-3-phosphocholine(out). The enzyme catalyses a 1,2-diacyl-sn-glycero-3-phospho-L-serine(in) = a 1,2-diacyl-sn-glycero-3-phospho-L-serine(out). Its activity is regulated as follows. Inhibited by nitric oxide. In terms of biological role, non-selective voltage-gated ion channel that mediates the transport of anions and cations through the mitochondrion outer membrane and plasma membrane. The channel at the outer mitochondrial membrane allows diffusion of small hydrophilic molecules; in the plasma membrane it is involved in cell volume regulation and apoptosis. It adopts an open conformation at low or zero membrane potential and a closed conformation at potentials above 30-40 mV. The open state has a weak anion selectivity whereas the closed state is cation-selective. Binds various signaling molecules, including the sphingolipid ceramide, the phospholipid phosphatidylcholine, and the sterols cholesterol and oxysterol. In depolarized mitochondria, acts downstream of PRKN and PINK1 to promote mitophagy or prevent apoptosis; polyubiquitination by PRKN promotes mitophagy, while monoubiquitination by PRKN decreases mitochondrial calcium influx which ultimately inhibits apoptosis. May participate in the formation of the permeability transition pore complex (PTPC) responsible for the release of mitochondrial products that triggers apoptosis. May mediate ATP export from cells. Part of a complex composed of HSPA9, ITPR1 and VDAC1 that regulates mitochondrial calcium-dependent apoptosis by facilitating calcium transport from the ER lumen to the mitochondria intermembrane space thus providing calcium for the downstream calcium channel MCU that directly releases it into mitochondria matrix. Mediates cytochrome c efflux. Its function is as follows. Catalyzes the scrambling of phospholipids across the outer mitochondrial membrane; the mechanism is unrelated to channel activity and is capable of translocating both anionic and zwitterionic phospholipids. The sequence is that of Non-selective voltage-gated ion channel VDAC1 from Bos taurus (Bovine).